The following is a 312-amino-acid chain: Flavonol 3-sulfotransferase (312 aa).

59-64 is a 3'-phosphoadenylyl sulfate binding site; it reads KSGTTW. Residue His119 is the Proton acceptor of the active site. 3'-phosphoadenylyl sulfate contacts are provided by residues Arg141, Ser149, Tyr207, and 277–279; that span reads RKG.

It belongs to the sulfotransferase 1 family. In terms of tissue distribution, highest in shoot tips and lowest in mature leaves and roots.

It localises to the cytoplasm. In terms of biological role, sulfotransferase that utilizes 3'-phospho-5'-adenylyl sulfate (PAPS) as sulfonate donor to catalyze the sulfate conjugation of quercetin, rhamnetin and isorhamnetin but not kaempferol. O-sulfation of position 3 of flavonol. May play a role in auxin transport. The sequence is that of Flavonol 3-sulfotransferase from Flaveria bidentis (Coastal plain yellowtops).